Reading from the N-terminus, the 412-residue chain is Tyrosine--tRNA ligase (412 aa).

Residue Y31 participates in L-tyrosine binding. The short motif at 36–45 (PTAPSLHIGH) is the 'HIGH' region element. Positions 162 and 166 each coordinate L-tyrosine. The 'KMSKS' region signature appears at 222-226 (KIGKT). ATP is bound at residue K225. Residues 345–412 (KRWLDVVVQL…KKKKQVIDLN (68 aa)) form the S4 RNA-binding domain.

Belongs to the class-I aminoacyl-tRNA synthetase family. TyrS type 1 subfamily. As to quaternary structure, homodimer.

It is found in the cytoplasm. It catalyses the reaction tRNA(Tyr) + L-tyrosine + ATP = L-tyrosyl-tRNA(Tyr) + AMP + diphosphate + H(+). Catalyzes the attachment of tyrosine to tRNA(Tyr) in a two-step reaction: tyrosine is first activated by ATP to form Tyr-AMP and then transferred to the acceptor end of tRNA(Tyr). The protein is Tyrosine--tRNA ligase of Chlamydia muridarum (strain MoPn / Nigg).